The sequence spans 191 residues: MARSAYSYMAMWYRKIGREVHERLMRKILIEWRKAPAIVRVERPFRLERARKLGYKAKQGVVVVRVRLMRGPFNRRRPDSGRRPKRMGVYGITAWKSWRQVAEERAARKHPNLEVLNSYWVADDGIYRYFEVILIDCNLPTIKNDPLYSGICGREVPRRRIIRRLRERQKKTIEYLKKTLLPRLKEAPSQQ.

It belongs to the eukaryotic ribosomal protein eL15 family.

This chain is Large ribosomal subunit protein eL15 (rpl15e), found in Pyrobaculum aerophilum (strain ATCC 51768 / DSM 7523 / JCM 9630 / CIP 104966 / NBRC 100827 / IM2).